The following is an 843-amino-acid chain: Protein piwi (843 aa).

The Nuclear localization signal signature appears at 1–12 (MADDQGRGRRRP). Positions 1–76 (MADDQGRGRR…TERKPWGDQY (76 aa)) are disordered. An interaction with CBX5 and papi region spans residues 1–257 (MADDQGRGRR…ILLGTEITHK (257 aa)). Symmetric dimethylarginine is present on residues Arg7, Arg9, Arg10, and Arg11. A compositionally biased stretch (basic and acidic residues) spans 41–72 (PRADPRIEASRERRALEEAPRREGGPTERKPW). The PAZ domain maps to 263–372 (TIYDIMRRCS…LIPELCRVTG (110 aa)). Residues 538–829 (LILCLVPNDN…LATLVGTNLH (292 aa)) enclose the Piwi domain. Gln589 serves as a coordination point for Mg(2+). Catalysis depends on residues Asp614 and Asp685. Residue Leu843 coordinates Mg(2+).

The protein belongs to the argonaute family. Piwi subfamily. In terms of assembly, in the ovaries, part of a complex composed of at least Panx, nxf2, piwi and Nxt1. The complex is knowns as Panx-induced co-transcriptional silencing (PICTS) complex, Panx-nxf2-dependent TAP/p15 silencing (Pandas complex), SFiNX (silencing factor interacting nuclear export variant) or piwi-Panx-nxf2-p15 (PPNP) complex. Interacts with vas; this interaction is RNA-independent. Interacts with Dcr-1 and Fmr1; these interactions occur in polar granules. Interacts (via N-terminal region) with CBX5 (via chromoshadow domain). Forms a complex with Hsp83 and Hop; probably Hop mediates the interaction between piwi and Hsp83. Forms a complex with Yb body components armi and fs(1)Yb; this interaction is required for proper piRNA loading and nuclear localization of piwi. Interaction of Piwi and fs(1)Yb is likely to occur via armi. Interacts (via the N-terminal region when unmethylated or symmetrically methylated at Arg-10) with papi (via Tudor domain). Interacts with vret. Interacts with Panx. Interacts with arx. Interacts with Tudor-SN. Interacts with Nup358 (via N-terminus). Associates with the nuclear pore complex via interaction with Elys. Interacts with thoc5; the interaction might be partly RNA-mediated. Interacts with xmas-2. In terms of processing, symmetrically dimethylated, most likely by csul. Methylation at Arg-10 enhances binding to papi whereas methylation at Arg-7, Arg-9 or Arg-11 reduces binding affinity to papi. Phosphorylated on serine and tyrosine residues in an Hsp83-dependent manner. In terms of tissue distribution, expressed in ovaries (at protein level). Expressed somatically in ovariole terminal filament cells, epithelial sheath cells, cap cells and follicle cells (at protein level). Expressed in nurse cells and oocytes in developing egg chambers (at protein level). In embryos, accumulates in pole cells (at protein level). In larval and adult testis, expressed in a germinal proliferative center at the apical tip containing somatic hub cells and mitotically dividing germ stem cells (at protein level).

The protein localises to the cytoplasm. It is found in the nucleus. It localises to the nucleoplasm. Its subcellular location is the chromosome. In terms of biological role, acts via the piwi-interacting RNA (piRNA) metabolic process, which mediates the repression of transposable elements during meiosis by forming complexes composed of piRNAs and Piwi proteins and governs the methylation and subsequent repression of transposons. Directly binds piRNAs, a class of 24 to 30 nucleotide RNAs that are generated by a Dicer-independent mechanism and are primarily derived from transposons and other repeated sequence elements. In ovarian somatic cells, mediates silencing of transposable elements at the transcriptional level in a mael-dependent manner. Involved in silencing of long terminal repeat (LTR) retrotransposons in male germline. In testis, regulates spermatogenesis together with Tudor-SN. In germ cells, mediates silencing at both transcriptional and post-transcriptional levels and is involved in the maintenance of populations of primary and secondary piRNAs. Piwi-mediated transcriptional silencing is accompanied by the formation of His3 trimethylated on 'Lys-10' (H3K9me3) associated euchromatin and heterochromatin. In ovary, associates predominantly with antisense piRNAs that contain uridine at their 5' end. Association with sense piRNAs is also observed but to a lesser extent. Mediates a somatic signaling mechanism required for the maintenance of germline stem cells to produce and maintain a daughter germline stem cell. It is not essential for the further differentiation of the committed daughter cell. Acts cell autonomously to promote germline stem cell division. Its role in stem cell maintenance does not seem to require nuclear localization. Required maternally for the posterior localization of osk and vas and for pole cell formation during oogenesis and early embryogenesis. Together with Hop and Hsp83, mediates canalization, also known as developmental robustness, likely via epigenetic silencing of existing genetic variants and suppression of transposon-induced new genetic variation. Shows RNA cleavage activity, although is not required for any of its known functions. In the ovaries, forms a complex with nxf2, Panx and Nxt1 which acts as effectors of cotranscriptional transposon silencing. This is Protein piwi from Drosophila melanogaster (Fruit fly).